A 79-amino-acid chain; its full sequence is Acyl carrier protein 2 (79 aa).

The Carrier domain maps to 2–77; it reads DDIETRVRKL…QAIDYLEEAV (76 aa). Ser37 is modified (O-(pantetheine 4'-phosphoryl)serine).

This sequence belongs to the acyl carrier protein (ACP) family. 4'-phosphopantetheine is transferred from CoA to a specific serine of apo-ACP by AcpS. This modification is essential for activity because fatty acids are bound in thioester linkage to the sulfhydryl of the prosthetic group.

The protein localises to the cytoplasm. It participates in lipid metabolism; fatty acid biosynthesis. In terms of biological role, carrier of the growing fatty acid chain in fatty acid biosynthesis. This is Acyl carrier protein 2 from Pseudomonas aeruginosa (strain ATCC 15692 / DSM 22644 / CIP 104116 / JCM 14847 / LMG 12228 / 1C / PRS 101 / PAO1).